A 248-amino-acid chain; its full sequence is DNA repair protein RecO (248 aa).

The protein belongs to the RecO family.

In terms of biological role, involved in DNA repair and RecF pathway recombination. The polypeptide is DNA repair protein RecO (Bartonella tribocorum (strain CIP 105476 / IBS 506)).